Reading from the N-terminus, the 457-residue chain is MGTARLRKLQLLLLLGAWRALGGAARCRVTLVLSPQKATSAVCRSSEATQDSELATLRMRLGRHEELLRALQRRAAEGGALADEVRALREHSLTLNTRLGQLRAQLQQEARAEPDLGAEPAAALGLLAERALDAEAEARRTTARLQQLDAQLREHAQLMSQHSSLLGRLQRACAGPERGQQQVLPLPLAPLVPLSLVGSASNTSRRLDQTPEHQREQSLRQQGPPSSLLPTGHLAVPTRPVGPWRDCAEAHGAGHWQSGVYDLRLGRRVVAVWCEQQQEGGGWTVIQRRQDGSVNFFTNWQHYKAGFGRPEGEYWLGLEPVHQVTSRGDHELLILLEDWGGRAARAHYDSFSLEPESDHYRLRLGQYHGDAGDSLSWHNDKPFSTVDRDRDSYSGNCALYHRGGWWYHACAHSNLNGVWYHGGHYRSRYQDGVYWAEFRGGAYSLKKAVMLTRLVRL.

The first 24 residues, 1 to 24 (MGTARLRKLQLLLLLGAWRALGGA), serve as a signal peptide directing secretion. 2 coiled-coil regions span residues 51-77 (DSEL…RAAE) and 126-164 (LLAE…QHSS). The tract at residues 201-235 (SNTSRRLDQTPEHQREQSLRQQGPPSSLLPTGHLA) is disordered. Residue Asn-202 is glycosylated (N-linked (GlcNAc...) asparagine). Residues 205-218 (RRLDQTPEHQREQS) show a composition bias toward basic and acidic residues. Positions 219–229 (LRQQGPPSSLL) are enriched in polar residues. Positions 238 to 456 (TRPVGPWRDC…KAVMLTRLVR (219 aa)) constitute a Fibrinogen C-terminal domain. Cystine bridges form between Cys-247-Cys-274 and Cys-397-Cys-410.

In terms of tissue distribution, highly expressed in the liver, specifically in hepatocytes, and weakly in the heart. Expressed in hematopoietic cells, platelets and mast cells, and detected at wounded skin.

It is found in the secreted. Its function is as follows. May play a role in the wound healing process. May promote epidermal proliferation, remodeling and regeneration. May promote the chemotactic activity of endothelial cells and induce neovascularization. May counteract high-fat diet-induced obesity and related insulin resistance through increased energy expenditure. This is Angiopoietin-related protein 6 (Angptl6) from Mus musculus (Mouse).